The sequence spans 146 residues: Large ribosomal subunit protein uL15 (146 aa).

A disordered region spans residues 1–54 (MTLRLNELAPAEGAKREHRRLGRGIGSGVGKTGGRGIKGQKSRKSGGVRPGFEG). The segment covering 23 to 37 (RGIGSGVGKTGGRGI) has biased composition (gly residues).

It belongs to the universal ribosomal protein uL15 family. In terms of assembly, part of the 50S ribosomal subunit.

Its function is as follows. Binds to the 23S rRNA. This is Large ribosomal subunit protein uL15 from Acinetobacter baumannii (strain SDF).